The following is a 122-amino-acid chain: MGDNNQATTGFDPAANAPDAAAWDKGKGKATDPTQDMRMDDDESDESEAEEMIDDDDDEDNDTLEPISSDNIISGGRRTRGKTIDFQAAAESLKDDGMDEDDDEDDDYVGAGDDDEDNKMQD.

Residues 1-122 (MGDNNQATTG…DDDEDNKMQD (122 aa)) are disordered. A compositionally biased stretch (low complexity) spans 12–21 (DPAANAPDAA). Residues 22-38 (AWDKGKGKATDPTQDMR) show a composition bias toward basic and acidic residues. 2 stretches are compositionally biased toward acidic residues: residues 39-63 (MDDDESDESEAEEMIDDDDDEDNDT) and 97-122 (GMDEDDDEDDDYVGAGDDDEDNKMQD).

This sequence belongs to the CHZ1 family. In terms of assembly, forms a heterotrimer with H2A.Z-H2B, stabilizing the association of the histone dimer. Also, with a lower affinity, forms a heterotrimer with H2A-H2B.

The protein resides in the nucleus. Functionally, forms a chaperone-bound H2A.Z-H2B complex that acts as a source for SWR1 complex-dependent H2A to H2A.Z histone replacement in chromatin. This Aspergillus niger (strain ATCC MYA-4892 / CBS 513.88 / FGSC A1513) protein is Histone H2A.Z-specific chaperone chz1 (chz1).